The primary structure comprises 194 residues: METNYLKRCFGNRLAQALAEVAMVQPSDPIEYLAHWLYHYRKTAKAKEKDRQEKIQLQREYENSLKETRMAEMLKQEERAIQEQCEKCHYQLGRRNSAVGTHPHPVPLISVASSLEKTKFMQENTEAFEKEPLKQESLPGTSDMIPGMPQQSPSSEPSVSSQVDLNTGTPQEINYQAIQHEIALEIHPGSESPP.

Residues 126–172 are disordered; sequence EAFEKEPLKQESLPGTSDMIPGMPQQSPSSEPSVSSQVDLNTGTPQE. Positions 149 to 163 are enriched in low complexity; it reads PQQSPSSEPSVSSQV.

It belongs to the dpy-30 family.

This is DPY30 domain-containing protein 2 (DYDC2) from Bos taurus (Bovine).